The sequence spans 234 residues: Proteasome subunit alpha type-2 (234 aa).

Position 2 is an N-acetylalanine (Ala-2). Tyr-6 carries the phosphotyrosine modification. Ser-7, Ser-14, and Ser-16 each carry phosphoserine. Tyr-24 bears the Phosphotyrosine mark. Lys-70 carries the post-translational modification N6-acetyllysine. A phosphotyrosine mark is found at Tyr-76 and Tyr-121. The residue at position 171 (Lys-171) is an N6-acetyllysine.

Belongs to the peptidase T1A family. The 26S proteasome consists of a 20S proteasome core and two 19S regulatory subunits. The 20S proteasome core is a barrel-shaped complex made of 28 subunits that are arranged in four stacked rings. The two outer rings are each formed by seven alpha subunits, and the two inner rings are formed by seven beta subunits. The proteolytic activity is exerted by three beta-subunits PSMB5, PSMB6 and PSMB7. Phosphorylated on tyrosine residues; which may be important for nuclear import.

The protein resides in the cytoplasm. It is found in the nucleus. Its function is as follows. Component of the 20S core proteasome complex involved in the proteolytic degradation of most intracellular proteins. This complex plays numerous essential roles within the cell by associating with different regulatory particles. Associated with two 19S regulatory particles, forms the 26S proteasome and thus participates in the ATP-dependent degradation of ubiquitinated proteins. The 26S proteasome plays a key role in the maintenance of protein homeostasis by removing misfolded or damaged proteins that could impair cellular functions, and by removing proteins whose functions are no longer required. Associated with the PA200 or PA28, the 20S proteasome mediates ubiquitin-independent protein degradation. This type of proteolysis is required in several pathways including spermatogenesis (20S-PA200 complex) or generation of a subset of MHC class I-presented antigenic peptides (20S-PA28 complex). The protein is Proteasome subunit alpha type-2 (PSMA2) of Bos taurus (Bovine).